The following is a 770-amino-acid chain: Elongation factor G, mitochondrial (770 aa).

A mitochondrion-targeting transit peptide spans 1 to 24; that stretch reads MLKLSFRSLTSRLPRLSTLVVRGY. The 297-residue stretch at 57-353 folds into the tr-type G domain; it reads KQIRNIGISA…AVCDYLPNPS (297 aa). GTP-binding positions include 66-73, 151-155, and 205-208; these read AHIDSGKT, DTPGH, and NKMD.

It belongs to the TRAFAC class translation factor GTPase superfamily. Classic translation factor GTPase family. EF-G/EF-2 subfamily.

The protein localises to the mitochondrion. Its pathway is protein biosynthesis; polypeptide chain elongation. Functionally, mitochondrial GTPase that catalyzes the GTP-dependent ribosomal translocation step during translation elongation. During this step, the ribosome changes from the pre-translocational (PRE) to the post-translocational (POST) state as the newly formed A-site-bound peptidyl-tRNA and P-site-bound deacylated tRNA move to the P and E sites, respectively. Catalyzes the coordinated movement of the two tRNA molecules, the mRNA and conformational changes in the ribosome. The polypeptide is Elongation factor G, mitochondrial (mef1) (Schizosaccharomyces pombe (strain 972 / ATCC 24843) (Fission yeast)).